The following is a 109-amino-acid chain: Large ribosomal subunit protein uL18c (109 aa).

The protein belongs to the universal ribosomal protein uL18 family. Part of the 50S ribosomal subunit; contacts the 5S rRNA.

Its subcellular location is the plastid. It is found in the chloroplast. Functionally, binds 5S rRNA, forms part of the central protuberance of the 50S subunit. This is Large ribosomal subunit protein uL18c (rpl18) from Cyanidioschyzon merolae (strain NIES-3377 / 10D) (Unicellular red alga).